Consider the following 89-residue polypeptide: Protein PerC (89 aa).

Its function is as follows. Transcriptional activator of eaeA/bfpA expression in enteropathogenic E.coli. The chain is Protein PerC (perC) from Escherichia coli O111:H-.